Here is a 191-residue protein sequence, read N- to C-terminus: Molybdenum cofactor guanylyltransferase (191 aa).

Residues 11-13 (LCG), Lys23, Asp66, and Asp97 contribute to the GTP site. A Mg(2+)-binding site is contributed by Asp97.

The protein belongs to the MobA family. In terms of assembly, monomer. Requires Mg(2+) as cofactor.

It is found in the cytoplasm. It catalyses the reaction Mo-molybdopterin + GTP + H(+) = Mo-molybdopterin guanine dinucleotide + diphosphate. Functionally, transfers a GMP moiety from GTP to Mo-molybdopterin (Mo-MPT) cofactor (Moco or molybdenum cofactor) to form Mo-molybdopterin guanine dinucleotide (Mo-MGD) cofactor. The chain is Molybdenum cofactor guanylyltransferase from Campylobacter jejuni subsp. jejuni serotype O:2 (strain ATCC 700819 / NCTC 11168).